The following is a 234-amino-acid chain: NLP effector protein 10 (234 aa).

The first 17 residues, 1 to 17 (MFKTFIIAAVAVATVRA), serve as a signal peptide directing secretion. An N-linked (GlcNAc...) asparagine glycan is attached at Asn-65. Residues 101-111 (AIMYSWYFPKD) carry the Conserved undecapeptide motif I motif. A Hepta-peptide GHRHDWE motif II motif is present at residues 118-124 (GHRHDWE).

Belongs to the Necrosis inducing protein (NPP1) family.

Its subcellular location is the secreted. Functionally, secreted effector that contributes moderately to virulence during infection by P.capsici. Does not cause visible reaction of C.annuum for several days after inoculation, but by 7 days after inoculation, small necrotic lesions become visible. Leads only to chlorotic areas, without necrosis at 7 days after non-host N.benthamiana leaves infection. In Phytophthora capsici, this protein is NLP effector protein 10.